A 440-amino-acid polypeptide reads, in one-letter code: Inner membrane metabolite transport protein YhjE (440 aa).

At methionine 1–glutamate 34 the chain is on the cytoplasmic side. A helical transmembrane segment spans residues phenylalanine 35–proline 55. Residues glutamine 56–serine 66 lie on the Periplasmic side of the membrane. A helical transmembrane segment spans residues leucine 67–phenylalanine 87. At glycine 88 to threonine 108 the chain is on the cytoplasmic side. The next 2 membrane-spanning stretches (helical) occupy residues valine 109–alanine 129 and leucine 130–alanine 150. The Cytoplasmic portion of the chain corresponds to threonine 151 to glutamine 167. Residues leucine 168–leucine 188 traverse the membrane as a helical segment. Residues threonine 189 to glutamine 192 are Periplasmic-facing. The helical transmembrane segment at phenylalanine 193–leucine 213 threads the bilayer. Over tyrosine 214–arginine 248 the chain is Cytoplasmic. The chain crosses the membrane as a helical span at residues valine 249 to valine 269. The Periplasmic segment spans residues tyrosine 270 to glutamate 289. A helical transmembrane segment spans residues valine 290–leucine 310. Residues leucine 311 to serine 320 lie on the Cytoplasmic side of the membrane. A helical transmembrane segment spans residues methionine 321 to glycine 341. At serine 342 to proline 345 the chain is on the periplasmic side. Residues isoleucine 346 to methionine 366 form a helical membrane-spanning segment. The Cytoplasmic segment spans residues glycine 367–serine 384. Residues phenylalanine 385–leucine 405 traverse the membrane as a helical segment. Residues glutamine 406–glycine 410 lie on the Periplasmic side of the membrane. The helical transmembrane segment at leucine 411–leucine 431 threads the bilayer. At threonine 432–leucine 440 the chain is on the cytoplasmic side.

It belongs to the major facilitator superfamily. Metabolite:H+ Symporter (MHS) family (TC 2.A.1.6) family.

It is found in the cell inner membrane. The chain is Inner membrane metabolite transport protein YhjE (yhjE) from Escherichia coli (strain K12).